Consider the following 100-residue polypeptide: UPF0213 protein YhbQ (100 aa).

In terms of domain architecture, GIY-YIG spans 2–77 (TPWFLYLIRT…KQLTKRQKER (76 aa)).

This sequence belongs to the UPF0213 family.

The polypeptide is UPF0213 protein YhbQ (Escherichia coli O139:H28 (strain E24377A / ETEC)).